The sequence spans 197 residues: HTH-type transcriptional regulator BetI (197 aa).

In terms of domain architecture, HTH tetR-type spans 8-68 (PIRRQQLIEA…ATMRYLMSVL (61 aa)). A DNA-binding region (H-T-H motif) is located at residues 31–50 (SIALIARLAGVSNGIISHYF).

Its pathway is amine and polyamine biosynthesis; betaine biosynthesis via choline pathway [regulation]. Repressor involved in the biosynthesis of the osmoprotectant glycine betaine. It represses transcription of the choline transporter BetT and the genes of BetAB involved in the synthesis of glycine betaine. The protein is HTH-type transcriptional regulator BetI of Pseudomonas fluorescens (strain Pf0-1).